The following is a 222-amino-acid chain: MILSKRPHLMIRKLSEMLVPRSRSAAIKPEEYTASPRSPLDLNFPSPVHSKRFGSGGVGLGIVAALEETSNGINRHDPVRYSGRFRCPEIDLSDEEYTYVTSPNGPTKVYYNDDGFELSENDYRRVHKPMVTVDEPPVIERQSVRGPTEFLSSCCLCKKKLQGKDIYMYKGEMGFCSAECRSVQIMNDERQEQCKTQVSRNADVLSSPYAAGQRLSAGVFVF.

The FLZ-type zinc-finger motif lies at 149–192 (EFLSSCCLCKKKLQGKDIYMYKGEMGFCSAECRSVQIMNDERQE).

The protein belongs to the FLZ family. Interacts with KIN10 and KIN11 via its FLZ-type zinc finger domain. Interacts with KINB1, KINB2, KINB3 and SNF4 via its N-terminal part.

Its subcellular location is the nucleus. It is found in the cytoplasm. Its function is as follows. May act as an adapter to facilitate the interaction of SnRK1 complex with effector proteins, conferring tissue- and stimulus-type specific differences in the SnRK1 regulation pathway. The polypeptide is FCS-Like Zinc finger 13 (Arabidopsis thaliana (Mouse-ear cress)).